The primary structure comprises 2471 residues: Histidine protein kinase 1 (2471 aa).

Polar residues predominate over residues 1 to 10; sequence MSMNFFNSSE. 3 disordered regions span residues 1 to 30, 52 to 75, and 395 to 415; these read MSMN…TEHY, ETKK…VPPS, and RQGS…FNIG. Basic and acidic residues predominate over residues 11–30; that stretch reads PARDHKPDQEKETVMTTEHY. In terms of domain architecture, Protein kinase spans 358 to 636; sequence EHPSQSTDQK…DCHSLLHDLI (279 aa). The 222-residue stretch at 2004-2225 folds into the Histidine kinase domain; that stretch reads NMSHEIRTPF…TFYVSVIMDA (222 aa). At His2007 the chain carries Phosphohistidine; by autocatalysis. A Response regulatory domain is found at 2340-2466; the sequence is RILLAEDNLL…ELRRILTKVG (127 aa). Position 2394 is a 4-aspartylphosphate (Asp2394).

The phosphorelay mechanism involves the sequential transfer of a phosphate group from His-2007 (H1) in the histidine kinase domain (transmitter domain) to Asp-2394 (D1) of the response regulatory domain (receiver domain). This transfer probably occurs between two CHK1 molecules, rather than intramolecularly.

It catalyses the reaction ATP + protein L-histidine = ADP + protein N-phospho-L-histidine.. Its function is as follows. Histidine kinase involved in a two-component signaling pathway that regulates cell wall mannan and glucan biosynthesis. Regulates quorum sensing as well as hyphal formation, biofilm formation, chlamidospore formation, and virulence. Plays a prominent role in phagocyte activation. Involved in the covering of the most potent pro-inflammatory cell wall molecules, the beta-glucans, underneath a dense mannan layer, so that the pathogen becomes partly invisible for immune cells such as phagocytes. This Candida albicans (strain SC5314 / ATCC MYA-2876) (Yeast) protein is Histidine protein kinase 1 (CHK1).